Consider the following 168-residue polypeptide: Ubiquitin-fold modifier-conjugating enzyme 1 (168 aa).

Cys-116 serves as the catalytic Glycyl thioester intermediate.

The protein belongs to the ubiquitin-conjugating enzyme family. UFC1 subfamily.

E2-like enzyme which forms an intermediate with UFM1 via a thioester linkage. The chain is Ubiquitin-fold modifier-conjugating enzyme 1 from Trichoplax adhaerens (Trichoplax reptans).